An 81-amino-acid polypeptide reads, in one-letter code: Conotoxin Cl9.6 (81 aa).

An N-terminal signal peptide occupies residues 1-20 (MSTLGMTLLILLLLLPLATP). Positions 21–40 (DDVGQPPKRDTLRNLLKIGT) are excised as a propeptide. Disulfide bonds link cysteine 46-cysteine 69, cysteine 54-cysteine 76, and cysteine 60-cysteine 78.

In terms of tissue distribution, expressed by the venom duct.

It localises to the secreted. This Californiconus californicus (California cone) protein is Conotoxin Cl9.6.